Consider the following 323-residue polypeptide: tRNA U34 carboxymethyltransferase (323 aa).

Residues Lys-91, Trp-105, Lys-110, Gly-130, 152 to 154, 181 to 182, Met-196, Tyr-200, and Arg-315 contribute to the carboxy-S-adenosyl-L-methionine site; these read DPT and IE.

The protein belongs to the class I-like SAM-binding methyltransferase superfamily. CmoB family. Homotetramer.

The enzyme catalyses carboxy-S-adenosyl-L-methionine + 5-hydroxyuridine(34) in tRNA = 5-carboxymethoxyuridine(34) in tRNA + S-adenosyl-L-homocysteine + H(+). Its function is as follows. Catalyzes carboxymethyl transfer from carboxy-S-adenosyl-L-methionine (Cx-SAM) to 5-hydroxyuridine (ho5U) to form 5-carboxymethoxyuridine (cmo5U) at position 34 in tRNAs. This Salmonella typhimurium (strain LT2 / SGSC1412 / ATCC 700720) protein is tRNA U34 carboxymethyltransferase.